We begin with the raw amino-acid sequence, 80 residues long: Exodeoxyribonuclease 7 small subunit (80 aa).

It belongs to the XseB family. As to quaternary structure, heterooligomer composed of large and small subunits.

The protein localises to the cytoplasm. It carries out the reaction Exonucleolytic cleavage in either 5'- to 3'- or 3'- to 5'-direction to yield nucleoside 5'-phosphates.. Functionally, bidirectionally degrades single-stranded DNA into large acid-insoluble oligonucleotides, which are then degraded further into small acid-soluble oligonucleotides. The polypeptide is Exodeoxyribonuclease 7 small subunit (Vibrio atlanticus (strain LGP32) (Vibrio splendidus (strain Mel32))).